A 77-amino-acid chain; its full sequence is Translational regulator CsrA (77 aa).

Positions 58–77 are disordered; sequence ANRRTAEETLDQASRLLSQK. Residues 68–77 are compositionally biased toward polar residues; sequence DQASRLLSQK.

Belongs to the CsrA/RsmA family. As to quaternary structure, homodimer; the beta-strands of each monomer intercalate to form a hydrophobic core, while the alpha-helices form wings that extend away from the core.

It is found in the cytoplasm. A translational regulator that binds mRNA to regulate translation initiation and/or mRNA stability. Usually binds in the 5'-UTR at or near the Shine-Dalgarno sequence preventing ribosome-binding, thus repressing translation. Its main target seems to be the major flagellin gene, while its function is anatagonized by FliW. In Magnetococcus marinus (strain ATCC BAA-1437 / JCM 17883 / MC-1), this protein is Translational regulator CsrA.